The primary structure comprises 454 residues: Serine/threonine-protein kinase NLK2 (454 aa).

The region spanning 67–356 (PEPDRPIGYG…AKDALAHPYL (290 aa)) is the Protein kinase domain. ATP contacts are provided by residues 73–81 (IGYGAFGVV) and K96. D193 serves as the catalytic Proton acceptor.

The protein belongs to the protein kinase superfamily. CMGC Ser/Thr protein kinase family. MAP kinase subfamily. As to quaternary structure, interacts with sox11, hmgxb4/hmg2l1, rnf138/narf, stat3.1 and mef2a. Mg(2+) is required as a cofactor.

It localises to the nucleus. Its subcellular location is the cytoplasm. The catalysed reaction is L-seryl-[protein] + ATP = O-phospho-L-seryl-[protein] + ADP + H(+). It carries out the reaction L-threonyl-[protein] + ATP = O-phospho-L-threonyl-[protein] + ADP + H(+). Activated by tyrosine and threonine phosphorylation. Functionally, negatively regulates Wnt/beta-catenin-signaling during development. Plays a role together with sox11 in neural induction during early embryogenesis. Involved in TGFbeta-mediated mesoderm induction in early embryos, acting downstream of map3k7/tak1 to phosphorylate stat3. Augments the rnf138/narf-directed ubiquitination and degradation of tcf/lef by enhancing the association of rnf138/narf and tcf/lef. Phosphorylates mef2a to play a role in anterior neural development, including eye formation. The protein is Serine/threonine-protein kinase NLK2 (nlk.2) of Xenopus tropicalis (Western clawed frog).